The following is a 481-amino-acid chain: Rho GTPase-activating protein 15 (481 aa).

Ser-51, Ser-111, Ser-204, Ser-207, and Ser-249 each carry phosphoserine. The region spanning 87–197 (MVEKEGYLQK…WFQAIKNAID (111 aa)) is the PH domain. The Rho-GAP domain maps to 287 to 476 (SHLHTVCERE…FMLTEYDKIF (190 aa)).

Its subcellular location is the cytoplasm. It is found in the membrane. Functionally, GTPase activator for the Rho-type GTPases by converting them to an inactive GDP-bound state. Has activity toward RAC1. Overexpression results in an increase in actin stress fibers and cell contraction. This Mus musculus (Mouse) protein is Rho GTPase-activating protein 15 (Arhgap15).